The sequence spans 299 residues: Somaliensene A/B synthase (299 aa).

The next 7 membrane-spanning stretches (helical) occupy residues 32 to 49 (WTTL…AVHT), 56 to 72 (TAVA…LFVY), 110 to 132 (IAVR…ALLW), 153 to 171 (LYAG…EIVA), 177 to 194 (AWRW…LMSV), 222 to 241 (VFLC…FLMA), and 247 to 269 (WWIV…RVVL).

Belongs to the UbiA prenyltransferase family. The cofactor is Mg(2+).

The protein resides in the cell membrane. The catalysed reaction is (2E,6E,10E,14E)-geranylfarnesyl diphosphate = somaliensene A + diphosphate. It carries out the reaction (2E,6E,10E,14E)-geranylfarnesyl diphosphate = (-)-somaliensene B + diphosphate. Its pathway is secondary metabolite biosynthesis; terpenoid biosynthesis. Functionally, sesterterpene cyclase, which converts geranylfarnesyl diphosphate (GFPP) into the terpenes somaliensene A and somaliensene B. In Streptomyces somaliensis (strain ATCC 33201 / DSM 40738 / JCM 12659 / KCTC 9044 / NCTC 11332 / NRRL B-12077 / IP 733), this protein is Somaliensene A/B synthase.